A 409-amino-acid chain; its full sequence is Isovaleryl-CoA dehydrogenase, mitochondrial (409 aa).

A mitochondrion-targeting transit peptide spans Met-1–Phe-22. FAD-binding positions include Leu-151–Ser-160 and Trp-184–Thr-186. A substrate-binding site is contributed by Ser-160. Substrate is bound by residues Ser-206 to Lys-207, Tyr-261, and Asp-268 to Arg-271. Catalysis depends on Glu-270, which acts as the Proton acceptor. Residues Arg-296, Gln-307, and Gln-364–Gly-368 each bind FAD. Ala-391–Gly-392 is a binding site for substrate. Thr-393 to Glu-395 contributes to the FAD binding site.

This sequence belongs to the acyl-CoA dehydrogenase family. As to quaternary structure, homodimer. It depends on FAD as a cofactor. In terms of tissue distribution, expressed in leaves, stems and flowers. Not detected in roots.

The protein localises to the mitochondrion. It catalyses the reaction 3-methylbutanoyl-CoA + oxidized [electron-transfer flavoprotein] + H(+) = 3-methylbut-2-enoyl-CoA + reduced [electron-transfer flavoprotein]. Its pathway is amino-acid degradation; L-leucine degradation; (S)-3-hydroxy-3-methylglutaryl-CoA from 3-isovaleryl-CoA: step 1/3. Functionally, involved in degradation of the branched-chain amino acids, phytol and lysine for the supply of carbon and electrons to the ETF/ETFQO complex during dark-induced sugar starvation. The polypeptide is Isovaleryl-CoA dehydrogenase, mitochondrial (IVD) (Arabidopsis thaliana (Mouse-ear cress)).